The sequence spans 263 residues: 4-hydroxy-2-oxo-heptane-1,7-dioate aldolase (263 aa).

The active-site Proton acceptor is the His45. Gln147 provides a ligand contact to substrate. Glu149 is an a divalent metal cation binding site. Positions 174 and 175 each coordinate substrate. Residue Asp175 participates in a divalent metal cation binding.

This sequence belongs to the HpcH/HpaI aldolase family. Homohexamer; trimer of dimers. Requires a divalent metal cation as cofactor.

The catalysed reaction is 4-hydroxy-2-oxoheptanedioate = succinate semialdehyde + pyruvate. It functions in the pathway aromatic compound metabolism; 4-hydroxyphenylacetate degradation; pyruvate and succinate semialdehyde from 4-hydroxyphenylacetate: step 7/7. Functionally, catalyzes the reversible retro-aldol cleavage of 4-hydroxy-2-ketoheptane-1,7-dioate (HKHD) to pyruvate and succinic semialdehyde. In Salmonella choleraesuis (strain SC-B67), this protein is 4-hydroxy-2-oxo-heptane-1,7-dioate aldolase.